Here is a 319-residue protein sequence, read N- to C-terminus: Aliphatic sulfonates import ATP-binding protein SsuB 1 (319 aa).

The 220-residue stretch at Val-63–Leu-282 folds into the ABC transporter domain. Residue Gly-95–Ser-102 coordinates ATP.

Belongs to the ABC transporter superfamily. Aliphatic sulfonates importer (TC 3.A.1.17.2) family. As to quaternary structure, the complex is composed of two ATP-binding proteins (SsuB), two transmembrane proteins (SsuC) and a solute-binding protein (SsuA).

The protein resides in the cell inner membrane. The catalysed reaction is ATP + H2O + aliphatic sulfonate-[sulfonate-binding protein]Side 1 = ADP + phosphate + aliphatic sulfonateSide 2 + [sulfonate-binding protein]Side 1.. In terms of biological role, part of the ABC transporter complex SsuABC involved in aliphatic sulfonates import. Responsible for energy coupling to the transport system. This chain is Aliphatic sulfonates import ATP-binding protein SsuB 1, found in Burkholderia lata (strain ATCC 17760 / DSM 23089 / LMG 22485 / NCIMB 9086 / R18194 / 383).